Reading from the N-terminus, the 52-residue chain is Protein YabQ (52 aa).

Functionally, identified as a multicopy suppressor of the slow growth phenotype of an rsgA (yjeQ) deletion mutant. This chain is Protein YabQ (yabQ), found in Escherichia coli (strain K12).